A 368-amino-acid chain; its full sequence is Abasic site processing protein YMR114C (368 aa).

Cys-2 serves as the catalytic Nucleophile. Cys-2 carries the post-translational modification Thiazolidine linkage to a ring-opened DNA abasic site. The interval 25-48 (VNTPKDASSNSQHPHDEEDTKDQP) is disordered. Residues 37 to 46 (HPHDEEDTKD) show a composition bias toward basic and acidic residues. Glu-132 is an active-site residue. The disordered stretch occupies residues 270 to 368 (LENDNEQGID…DSRGKKKIKK (99 aa)). Basic and acidic residues-rich tracts occupy residues 281–296 (RGVK…DVFN), 304–313 (NSYDGLKKNE), and 326–349 (IGDR…EKRN). Position 338 is a phosphoserine (Ser-338).

It belongs to the SOS response-associated peptidase family.

The protein localises to the chromosome. Its activity is regulated as follows. Formation and reversal of DNA-protein cross-link depends on DNA context. Catalyzes formation of the thiazolidine linkage in presence of abasic sites in single-stranded DNA. Mediates the reversal of the thiazolidine cross-link in presence of double stranded DNA. Functionally, sensor of abasic sites in single-stranded DNA (ssDNA) required to preserve genome integrity by promoting error-free repair of abasic sites. Recognizes and binds abasic sites in ssDNA at replication forks and chemically modifies the lesion by forming a covalent cross-link with DNA: forms a stable thiazolidine linkage between a ring-opened abasic site and the alpha-amino and sulfhydryl substituents of its N-terminal catalytic cysteine residue. The DNA-protein cross-link is then reversed: able to catalyze the reversal of the thiazolidine cross-link and cycle between a cross-link and a non-cross-linked state depending on DNA context: mediates self-reversal of the thiazolidine cross-link in double stranded DNA. Acts as a protease: mediates autocatalytic processing of its N-terminal methionine in order to expose the catalytic cysteine. This chain is Abasic site processing protein YMR114C, found in Saccharomyces cerevisiae (strain ATCC 204508 / S288c) (Baker's yeast).